The chain runs to 601 residues: Serine/threonine-protein phosphatase 2A 65 kDa regulatory subunit A beta isoform (601 aa).

A2 is subject to N-acetylalanine. 15 HEAT repeats span residues 20-58, 59-96, 97-135, 136-173, 174-212, 213-251, 252-290, 291-333, 334-372, 373-411, 412-450, 451-489, 490-528, 529-567, and 568-601; these read DSLYPIAVLIDELRNEDVQLRLNSIKKLSTIALALGVER, TRTELLPFLTDTIYDEDEVLLALAEQLGNFTGLVGGPD, FAHCLLPPLESLATVEETVVRDKAVESLRQISQEHTPVA, LEAHFVPLVKRLASGDWFTSRTSACGLFSVCYPRASNA, VKAEIRQHFRSLCSDDTPMVRRAAASKLGEFAKVLELDS, VKTEIVPLFTNLASDEQDSVRLLAVEACVSIAQLLSQDD, LEALVMPTLRQAAEDKSWRVRYMVADKFSELQKAVGPKI, ALSD…RETV, IMNQILPYIKELVSDTNQHVKSALASVIMGLSTVLGKEN, TIEHLLPLFLAQLKDECPEVRLNIISNLDCVNEVIGIRQ, LSQSLLPAIVELAEDAKWRVRLAIIEYMPLLAGQLGVEF, FDEKLNSLCMAWLVDHVYAIREAATNNLMKLVQKFGTEW, AQNTIVPKVLVMANDPNYLHRMTTLFCINALSEACGKEI, TTKQMLPIVLKMAGDQVANVRFNVAKSLQKIGPILDTNA, and LQGEVKPVLQKLGQDEDMDVKYFAQEAISVLALA.

This sequence belongs to the phosphatase 2A regulatory subunit A family. As to quaternary structure, PP2A consists of a common heterodimeric core enzyme, composed of a 36 kDa catalytic subunit (subunit C) and a 65 kDa constant regulatory subunit (PR65 or subunit A), that associates with a variety of regulatory subunits. Proteins that associate with the core dimer include three families of regulatory subunits B (the R2/B/PR55/B55, R3/B''/PR72/PR130/PR59 and R5/B'/B56 families), the 48 kDa variable regulatory subunit, viral proteins, and cell signaling molecules. Interacts with IPO9. Interacts with SGO1. Interacts with RAF1.

Its function is as follows. The PR65 subunit of protein phosphatase 2A serves as a scaffolding molecule to coordinate the assembly of the catalytic subunit and a variable regulatory B subunit. In Rattus norvegicus (Rat), this protein is Serine/threonine-protein phosphatase 2A 65 kDa regulatory subunit A beta isoform (Ppp2r1b).